A 78-amino-acid chain; its full sequence is Large ribosomal subunit protein bL28 (78 aa).

The segment at 1–20 (MSRVCQVTGKRPVTGNNRSH) is disordered.

The protein belongs to the bacterial ribosomal protein bL28 family.

The polypeptide is Large ribosomal subunit protein bL28 (Photobacterium profundum (strain SS9)).